Reading from the N-terminus, the 332-residue chain is UDP-N-acetylenolpyruvoylglucosamine reductase (332 aa).

The FAD-binding PCMH-type domain occupies 15-184 (IDVSAACFLE…TYVSFRLSKR (170 aa)). Residue Arg160 is part of the active site. Ser232 serves as the catalytic Proton donor. The active site involves Glu328.

Belongs to the MurB family. It depends on FAD as a cofactor.

It is found in the cytoplasm. The catalysed reaction is UDP-N-acetyl-alpha-D-muramate + NADP(+) = UDP-N-acetyl-3-O-(1-carboxyvinyl)-alpha-D-glucosamine + NADPH + H(+). Its pathway is cell wall biogenesis; peptidoglycan biosynthesis. In terms of biological role, cell wall formation. The chain is UDP-N-acetylenolpyruvoylglucosamine reductase from Bacteroides fragilis (strain YCH46).